Here is a 96-residue protein sequence, read N- to C-terminus: Small ribosomal subunit protein bS18 (96 aa).

Residues 1–22 (MYKDVDSHQRDSRSDGHQDGFK) show a composition bias toward basic and acidic residues. Residues 1 to 25 (MYKDVDSHQRDSRSDGHQDGFKKNP) are disordered.

Belongs to the bacterial ribosomal protein bS18 family. Part of the 30S ribosomal subunit. Forms a tight heterodimer with protein bS6.

Its function is as follows. Binds as a heterodimer with protein bS6 to the central domain of the 16S rRNA, where it helps stabilize the platform of the 30S subunit. This chain is Small ribosomal subunit protein bS18, found in Borrelia hermsii (strain HS1 / DAH).